Consider the following 1930-residue polypeptide: Myosin-16 (1930 aa).

In terms of domain architecture, Myosin N-terminal SH3-like spans 35 to 84 (DIKKSCWVKDEKEGFIAGEIQSEQGDQVTVKTVNNQTVTVKKDDVQQMNP). In terms of domain architecture, Myosin motor spans 88-774 (YQASDMADMT…ILAKLEDMRD (687 aa)). 181–188 (GESGAGKT) serves as a coordination point for ATP. 2 actin-binding regions span residues 652-674 (LNKL…VPNE) and 753-767 (KIGH…GILA). Residues 777–806 (LAKIMTMLQCRLRGFLMRIEFKKMLERRIG) enclose the IQ domain. Residues 835 to 1921 (LLNVARQEEE…ALNKLRTRHR (1087 aa)) adopt a coiled-coil conformation. Residues 1116–1137 (EELEAERSMRAKVEKQRSDLSR) are disordered. Basic and acidic residues predominate over residues 1120 to 1137 (AERSMRAKVEKQRSDLSR).

The protein belongs to the TRAFAC class myosin-kinesin ATPase superfamily. Myosin family.

It localises to the cytoplasm. The protein resides in the myofibril. May play a role in masticatory muscles contraction. The sequence is that of Myosin-16 from Canis lupus familiaris (Dog).